A 532-amino-acid chain; its full sequence is Polyadenylation factor subunit 2 (532 aa).

A disordered region spans residues 50–72 (AGYQPRQQPQGEEDRRPAHRRTV). The segment covering 61 to 72 (EEDRRPAHRRTV) has biased composition (basic and acidic residues). 7 WD repeats span residues 143–182 (KVRHPVYSATWTPDGRRLLTGSMSGEFTLWNGMTFNFESI), 185–224 (AHESGVRSLKYSHSGEWLLSGDHEGNVKFWQPSLNCVNVI), 227–266 (AHRESIRELAFAPSDHKFVTGSDDGLLKIWDFHESSNAES), 270–309 (GHGWDVKSVDWHSELGLIVSGSKDNLIKLWDPRSAKNVNT), 312–353 (GFKN…SGSS), 376–416 (GHDS…AGGA), and 432–471 (AHDYCVSTLDYHPEGHVLCSGGLDRMTRFWARPRPGDPTS). The segment at 513–532 (NTAQPEVTDDEPVSIPGFAR) is disordered.

Its subcellular location is the nucleus. Its function is as follows. Required for 3'-end cleavage and polyadenylation of pre-mRNAs. Also involved in chromosome segregation where it has a role in chromosome attachment to the mitotic spindle. This Yarrowia lipolytica (strain CLIB 122 / E 150) (Yeast) protein is Polyadenylation factor subunit 2 (PFS2).